Consider the following 228-residue polypeptide: UPF0758 protein Gura_4138 (228 aa).

Residues 106–228 (RFTSPSQVFE…FLSFVDRGMM (123 aa)) form the MPN domain. His-177, His-179, and Asp-190 together coordinate Zn(2+). A JAMM motif motif is present at residues 177–190 (HNHPTGDPTPSRED).

The protein belongs to the UPF0758 family.

The chain is UPF0758 protein Gura_4138 from Geotalea uraniireducens (strain Rf4) (Geobacter uraniireducens).